Reading from the N-terminus, the 92-residue chain is Small ribosomal subunit protein uS19 (92 aa).

Belongs to the universal ribosomal protein uS19 family.

Its function is as follows. Protein S19 forms a complex with S13 that binds strongly to the 16S ribosomal RNA. In Corynebacterium aurimucosum (strain ATCC 700975 / DSM 44827 / CIP 107346 / CN-1) (Corynebacterium nigricans), this protein is Small ribosomal subunit protein uS19.